A 396-amino-acid chain; its full sequence is NADH-quinone oxidoreductase subunit D (396 aa).

This sequence belongs to the complex I 49 kDa subunit family. NDH-1 is composed of 14 different subunits. Subunits NuoB, C, D, E, F, and G constitute the peripheral sector of the complex.

The protein resides in the cell inner membrane. It carries out the reaction a quinone + NADH + 5 H(+)(in) = a quinol + NAD(+) + 4 H(+)(out). Functionally, NDH-1 shuttles electrons from NADH, via FMN and iron-sulfur (Fe-S) centers, to quinones in the respiratory chain. The immediate electron acceptor for the enzyme in this species is believed to be ubiquinone. Couples the redox reaction to proton translocation (for every two electrons transferred, four hydrogen ions are translocated across the cytoplasmic membrane), and thus conserves the redox energy in a proton gradient. The protein is NADH-quinone oxidoreductase subunit D of Agrobacterium fabrum (strain C58 / ATCC 33970) (Agrobacterium tumefaciens (strain C58)).